The following is a 137-amino-acid chain: Large-conductance mechanosensitive channel (137 aa).

Residues 1–16 are Cytoplasmic-facing; it reads MSIIKEFREFAMRGNV. A helical transmembrane segment spans residues 17 to 45; the sequence is VDLAVGVIIGALFGKIVSSLVSDIIMPPL. Residues 46–74 are Periplasmic-facing; that stretch reads GLLIGGVDFKQFALFLRNAQGGIPAVVMN. A helical membrane pass occupies residues 75–94; that stretch reads YGAFIQNIFDFIIVAFAIFI. Topologically, residues 95–137 are cytoplasmic; sequence AIKLMNKMRCKQEDTPAAPPKPSAEEKLLAEIRDLLKEQQTRQ.

The protein belongs to the MscL family. In terms of assembly, homopentamer.

Its subcellular location is the cell inner membrane. Its function is as follows. Channel that opens in response to stretch forces in the membrane lipid bilayer. Forms a nonselective ion channel with a conductance of about 4 nanosiemens. May participate in the regulation of osmotic pressure changes within the cell. This is Large-conductance mechanosensitive channel from Pectobacterium carotovorum (Erwinia carotovora).